A 286-amino-acid polypeptide reads, in one-letter code: Pantothenate synthetase (286 aa).

Residue 30-37 (MGFLHEGH) coordinates ATP. Residue H37 is the Proton donor of the active site. Q61 contributes to the (R)-pantoate binding site. Q61 provides a ligand contact to beta-alanine. Residue 147–150 (GLKD) participates in ATP binding. Q153 lines the (R)-pantoate pocket. ATP-binding positions include V176 and 184 to 187 (KSSR).

It belongs to the pantothenate synthetase family. In terms of assembly, homodimer.

Its subcellular location is the cytoplasm. It catalyses the reaction (R)-pantoate + beta-alanine + ATP = (R)-pantothenate + AMP + diphosphate + H(+). The protein operates within cofactor biosynthesis; (R)-pantothenate biosynthesis; (R)-pantothenate from (R)-pantoate and beta-alanine: step 1/1. Its function is as follows. Catalyzes the condensation of pantoate with beta-alanine in an ATP-dependent reaction via a pantoyl-adenylate intermediate. The polypeptide is Pantothenate synthetase (Bacillus subtilis (strain 168)).